Here is a 273-residue protein sequence, read N- to C-terminus: Acetyl-coenzyme A carboxylase carboxyl transferase subunit alpha (273 aa).

Residues 1-244 form the CoA carboxyltransferase C-terminal domain; that stretch reads MKKATQSKAW…KVVLKQALDE (244 aa).

It belongs to the AccA family. In terms of assembly, acetyl-CoA carboxylase is a heterohexamer composed of biotin carboxyl carrier protein (AccB), biotin carboxylase (AccC) and two subunits each of ACCase subunit alpha (AccA) and ACCase subunit beta (AccD).

The protein resides in the cytoplasm. It catalyses the reaction N(6)-carboxybiotinyl-L-lysyl-[protein] + acetyl-CoA = N(6)-biotinyl-L-lysyl-[protein] + malonyl-CoA. Its pathway is lipid metabolism; malonyl-CoA biosynthesis; malonyl-CoA from acetyl-CoA: step 1/1. In terms of biological role, component of the acetyl coenzyme A carboxylase (ACC) complex. First, biotin carboxylase catalyzes the carboxylation of biotin on its carrier protein (BCCP) and then the CO(2) group is transferred by the carboxyltransferase to acetyl-CoA to form malonyl-CoA. The chain is Acetyl-coenzyme A carboxylase carboxyl transferase subunit alpha from Acinetobacter baumannii (strain ACICU).